Reading from the N-terminus, the 348-residue chain is UPF0283 membrane protein PMI1371 (348 aa).

The next 2 helical transmembrane spans lie at 69–89 and 99–119; these read LITV…GQWI and IALG…GSVI.

This sequence belongs to the UPF0283 family.

The protein localises to the cell inner membrane. In Proteus mirabilis (strain HI4320), this protein is UPF0283 membrane protein PMI1371.